Consider the following 628-residue polypeptide: Chaperone protein DnaK (628 aa).

T197 carries the phosphothreonine; by autocatalysis modification. Basic and acidic residues predominate over residues 595-604; it reads AEAMYKKEQG. A disordered region spans residues 595-628; it reads AEAMYKKEQGEQAGAQPNQKAKKDDDDVIDAEVE.

The protein belongs to the heat shock protein 70 family.

In terms of biological role, acts as a chaperone. This chain is Chaperone protein DnaK, found in Aliarcobacter butzleri (strain RM4018) (Arcobacter butzleri).